A 261-amino-acid polypeptide reads, in one-letter code: Neurexophilin-2 (261 aa).

An N-terminal signal peptide occupies residues Met1–Ser22. The segment at Glu23 to Ile87 is II. N-linked (GlcNAc...) asparagine glycosylation is found at Asn83, Asn136, Asn146, and Asn152. The segment at Gln88–Phe166 is III. The IV (linker domain) stretch occupies residues Glu167 to Glu175. The tract at residues Thr176–Gly261 is v (Cys-rich).

It belongs to the neurexophilin family. Post-translationally, may be proteolytically processed at the boundary between the N-terminal non-conserved and the central conserved domain in neuron-like cells.

The protein resides in the secreted. May be signaling molecules that resemble neuropeptides and that act by binding to alpha-neurexins and possibly other receptors. This Mus musculus (Mouse) protein is Neurexophilin-2 (Nxph2).